The sequence spans 392 residues: uncharacterized protein (392 aa).

The N-terminal 34 residues, 1-34 (MCISSSSLLCGINSLKYASNRVGILIPPFQTASS), are a transit peptide targeting the mitochondrion. The next 8 membrane-spanning stretches (helical) occupy residues 115–135 (VAIM…WHWD), 150–172 (FRFM…WWTL), 185–205 (LLVN…KFGV), 208–225 (ALSV…VALQ), 277–297 (ATFV…AVYA), 299–319 (AAIF…VYPV), 321–341 (AGIF…LNYE), and 350–370 (AHVS…PAMW). The active-site Nucleophile is Ser-292. His-351 is an active-site residue.

This sequence belongs to the peptidase S54 family.

Its subcellular location is the mitochondrion inner membrane. This is an uncharacterized protein from Schizosaccharomyces pombe (strain 972 / ATCC 24843) (Fission yeast).